The sequence spans 309 residues: MSQQLPDVQASSPDVTVGLNRVGVTGVEKLVKLGRRDRDPIVLMAEFEVFVDLPSWRKGADMSRNMEVIDETLETAVSEEAYRVEDVCGDAAELLLEKHDYTTKAEVRMEAEYVTHESTPASEMATQSTADIIASATATEDGTSEEIGARVTGMTVCPCSQGMSASRARETLKQLNVEDDVIEEFLETNPQAGHSQRGHATLTVQSDGAPEVDLNELIEVARDSMSARIYNLAKRPDEDHMTYEAHKDAKFVEDCVRALAEGVVNTFPDLPDDAVVTMKQSNDESIHQHNAHAERVAQLDDLRQEVSED.

The protein belongs to the GTP cyclohydrolase IV family. In terms of assembly, homodimer. Requires Fe(2+) as cofactor.

It catalyses the reaction GTP + H2O = 7,8-dihydroneopterin 2',3'-cyclic phosphate + formate + diphosphate + H(+). It functions in the pathway cofactor biosynthesis; 5,6,7,8-tetrahydromethanopterin biosynthesis. Converts GTP to 7,8-dihydro-D-neopterin 2',3'-cyclic phosphate, the first intermediate in the biosynthesis of coenzyme methanopterin. In Haloarcula marismortui (strain ATCC 43049 / DSM 3752 / JCM 8966 / VKM B-1809) (Halobacterium marismortui), this protein is GTP cyclohydrolase MptA.